The following is a 265-amino-acid chain: MKTTTMSQLRQWKQEKRKFATLTAYDASFAQLFAEQGIQVLLVGDSLGMTLQGFDSTLPVTVADVAYHTRAVRRGAPHCLLLADMPFMSYATPELAFTHAAELMRAGANMVKLEGGSWLCDTIRMLAERAVPVCGHLGLTPQSVNIFGGYKVQGREEVAANQLLQDAIALEQAGAQLLVLECVPVELAQRVTEELTIPVIGIGAGNVTDGQILVMHDALGITGGHTPKFSKNFLAHSAGDIRAAIKLYIEEVEGGIYPAEEHTFQ.

The Mg(2+) site is built by D45 and D84. Residues 45–46 (DS), D84, and K112 contribute to the 3-methyl-2-oxobutanoate site. Residue E114 participates in Mg(2+) binding. The Proton acceptor role is filled by E181.

It belongs to the PanB family. In terms of assembly, homodecamer; pentamer of dimers. Requires Mg(2+) as cofactor.

Its subcellular location is the cytoplasm. The catalysed reaction is 3-methyl-2-oxobutanoate + (6R)-5,10-methylene-5,6,7,8-tetrahydrofolate + H2O = 2-dehydropantoate + (6S)-5,6,7,8-tetrahydrofolate. It participates in cofactor biosynthesis; (R)-pantothenate biosynthesis; (R)-pantoate from 3-methyl-2-oxobutanoate: step 1/2. Catalyzes the reversible reaction in which hydroxymethyl group from 5,10-methylenetetrahydrofolate is transferred onto alpha-ketoisovalerate to form ketopantoate. In Yersinia pseudotuberculosis serotype IB (strain PB1/+), this protein is 3-methyl-2-oxobutanoate hydroxymethyltransferase.